Reading from the N-terminus, the 60-residue chain is Cytochrome c oxidase subunit 9, mitochondrial (60 aa).

Topologically, residues 1-15 are mitochondrial matrix; it reads MSALAPITGTLKKRI. Residues 16–38 traverse the membrane as a helical segment; it reads ITDIVIGFSLGGVMASYWWWGFH. The Mitochondrial intermembrane portion of the chain corresponds to 39 to 57; the sequence is KNVIDRREAFYADLAEKKK. A propeptide spans 58–60 (removed in mature form); the sequence is AEN.

This sequence belongs to the fungal cytochrome c oxidase subunit 7a family. Component of the cytochrome c oxidase (complex IV, CIV), a multisubunit enzyme composed of a catalytic core of 3 subunits and several supernumerary subunits. The complex exists as a monomer or a dimer and forms supercomplexes (SCs) in the inner mitochondrial membrane with ubiquinol-cytochrome c oxidoreductase (cytochrome b-c1 complex, complex III, CIII).

It localises to the mitochondrion inner membrane. The protein operates within energy metabolism; oxidative phosphorylation. Its function is as follows. Component of the cytochrome c oxidase, the last enzyme in the mitochondrial electron transport chain which drives oxidative phosphorylation. The respiratory chain contains 3 multisubunit complexes succinate dehydrogenase (complex II, CII), ubiquinol-cytochrome c oxidoreductase (cytochrome b-c1 complex, complex III, CIII) and cytochrome c oxidase (complex IV, CIV), that cooperate to transfer electrons derived from NADH and succinate to molecular oxygen, creating an electrochemical gradient over the inner membrane that drives transmembrane transport and the ATP synthase. Cytochrome c oxidase is the component of the respiratory chain that catalyzes the reduction of oxygen to water. Electrons originating from reduced cytochrome c in the intermembrane space (IMS) are transferred via the dinuclear copper A center (CU(A)) of subunit 2 and heme A of subunit 1 to the active site in subunit 1, a binuclear center (BNC) formed by heme A3 and copper B (CU(B)). The BNC reduces molecular oxygen to 2 water molecules using 4 electrons from cytochrome c in the IMS and 4 protons from the mitochondrial matrix. This chain is Cytochrome c oxidase subunit 9, mitochondrial (COX9), found in Candida glabrata (strain ATCC 2001 / BCRC 20586 / JCM 3761 / NBRC 0622 / NRRL Y-65 / CBS 138) (Yeast).